A 219-amino-acid chain; its full sequence is Thiamine-phosphate synthase (219 aa).

4-amino-2-methyl-5-(diphosphooxymethyl)pyrimidine is bound by residues 44–48 and N79; that span reads QFREK. The Mg(2+) site is built by D80 and D99. S117 is a 4-amino-2-methyl-5-(diphosphooxymethyl)pyrimidine binding site. 143-145 is a binding site for 2-[(2R,5Z)-2-carboxy-4-methylthiazol-5(2H)-ylidene]ethyl phosphate; the sequence is TST. K146 contacts 4-amino-2-methyl-5-(diphosphooxymethyl)pyrimidine. 2-[(2R,5Z)-2-carboxy-4-methylthiazol-5(2H)-ylidene]ethyl phosphate-binding positions include G175 and 195–196; that span reads IS.

This sequence belongs to the thiamine-phosphate synthase family. It depends on Mg(2+) as a cofactor.

It carries out the reaction 2-[(2R,5Z)-2-carboxy-4-methylthiazol-5(2H)-ylidene]ethyl phosphate + 4-amino-2-methyl-5-(diphosphooxymethyl)pyrimidine + 2 H(+) = thiamine phosphate + CO2 + diphosphate. The enzyme catalyses 2-(2-carboxy-4-methylthiazol-5-yl)ethyl phosphate + 4-amino-2-methyl-5-(diphosphooxymethyl)pyrimidine + 2 H(+) = thiamine phosphate + CO2 + diphosphate. It catalyses the reaction 4-methyl-5-(2-phosphooxyethyl)-thiazole + 4-amino-2-methyl-5-(diphosphooxymethyl)pyrimidine + H(+) = thiamine phosphate + diphosphate. Its pathway is cofactor biosynthesis; thiamine diphosphate biosynthesis; thiamine phosphate from 4-amino-2-methyl-5-diphosphomethylpyrimidine and 4-methyl-5-(2-phosphoethyl)-thiazole: step 1/1. In terms of biological role, condenses 4-methyl-5-(beta-hydroxyethyl)thiazole monophosphate (THZ-P) and 2-methyl-4-amino-5-hydroxymethyl pyrimidine pyrophosphate (HMP-PP) to form thiamine monophosphate (TMP). This Bacillus cereus (strain B4264) protein is Thiamine-phosphate synthase.